The chain runs to 209 residues: Uridine kinase (209 aa).

12-19 provides a ligand contact to ATP; the sequence is GGSGSGKT.

Belongs to the uridine kinase family.

It localises to the cytoplasm. It catalyses the reaction uridine + ATP = UMP + ADP + H(+). The enzyme catalyses cytidine + ATP = CMP + ADP + H(+). Its pathway is pyrimidine metabolism; CTP biosynthesis via salvage pathway; CTP from cytidine: step 1/3. The protein operates within pyrimidine metabolism; UMP biosynthesis via salvage pathway; UMP from uridine: step 1/1. This Listeria welshimeri serovar 6b (strain ATCC 35897 / DSM 20650 / CCUG 15529 / CIP 8149 / NCTC 11857 / SLCC 5334 / V8) protein is Uridine kinase.